A 261-amino-acid chain; its full sequence is Cytochrome c oxidase subunit 3 (261 aa).

Residues 1–15 lie on the Mitochondrial matrix side of the membrane; it reads MTHQTHAYHMVNPSP. The helical transmembrane segment at 16–34 threads the bilayer; the sequence is WPLTGALSALLMTSGLIMW. At 35-40 the chain is on the mitochondrial intermembrane side; the sequence is FHFNST. Residues 41 to 66 traverse the membrane as a helical segment; sequence ILLMLGLTTNMLTMYQWWRDVIREST. Topologically, residues 67 to 72 are mitochondrial matrix; that stretch reads FQGHHT. The chain crosses the membrane as a helical span at residues 73–105; it reads PNVQKGLRYGMILFIISEVLFFTGFFWAFYHSS. Residues 106–128 are Mitochondrial intermembrane-facing; the sequence is LAPTPELGGCWPPTGIHPLNPLE. The helical transmembrane segment at 129–152 threads the bilayer; the sequence is VPLLNTSVLLASGVSITWAHHSLM. Residues 153-155 lie on the Mitochondrial matrix side of the membrane; the sequence is EGN. The helical transmembrane segment at 156–183 threads the bilayer; the sequence is RNHMLQALFITIALGVYFTLLQASEYYE. The Mitochondrial intermembrane portion of the chain corresponds to 184 to 190; that stretch reads APFTISD. A helical membrane pass occupies residues 191–223; it reads GVYGSTFFVATGFHGLHVIIGSTFLIVCFFRQL. Residues 224–232 lie on the Mitochondrial matrix side of the membrane; the sequence is KFHFTSNHH. A helical transmembrane segment spans residues 233 to 256; sequence FGFEAAAWYWHFVDVVWLFLYVSI. At 257 to 261 the chain is on the mitochondrial intermembrane side; that stretch reads YWWGS.

The protein belongs to the cytochrome c oxidase subunit 3 family. In terms of assembly, component of the cytochrome c oxidase (complex IV, CIV), a multisubunit enzyme composed of 14 subunits. The complex is composed of a catalytic core of 3 subunits MT-CO1, MT-CO2 and MT-CO3, encoded in the mitochondrial DNA, and 11 supernumerary subunits COX4I, COX5A, COX5B, COX6A, COX6B, COX6C, COX7A, COX7B, COX7C, COX8 and NDUFA4, which are encoded in the nuclear genome. The complex exists as a monomer or a dimer and forms supercomplexes (SCs) in the inner mitochondrial membrane with NADH-ubiquinone oxidoreductase (complex I, CI) and ubiquinol-cytochrome c oxidoreductase (cytochrome b-c1 complex, complex III, CIII), resulting in different assemblies (supercomplex SCI(1)III(2)IV(1) and megacomplex MCI(2)III(2)IV(2)).

It is found in the mitochondrion inner membrane. The enzyme catalyses 4 Fe(II)-[cytochrome c] + O2 + 8 H(+)(in) = 4 Fe(III)-[cytochrome c] + 2 H2O + 4 H(+)(out). In terms of biological role, component of the cytochrome c oxidase, the last enzyme in the mitochondrial electron transport chain which drives oxidative phosphorylation. The respiratory chain contains 3 multisubunit complexes succinate dehydrogenase (complex II, CII), ubiquinol-cytochrome c oxidoreductase (cytochrome b-c1 complex, complex III, CIII) and cytochrome c oxidase (complex IV, CIV), that cooperate to transfer electrons derived from NADH and succinate to molecular oxygen, creating an electrochemical gradient over the inner membrane that drives transmembrane transport and the ATP synthase. Cytochrome c oxidase is the component of the respiratory chain that catalyzes the reduction of oxygen to water. Electrons originating from reduced cytochrome c in the intermembrane space (IMS) are transferred via the dinuclear copper A center (CU(A)) of subunit 2 and heme A of subunit 1 to the active site in subunit 1, a binuclear center (BNC) formed by heme A3 and copper B (CU(B)). The BNC reduces molecular oxygen to 2 water molecules using 4 electrons from cytochrome c in the IMS and 4 protons from the mitochondrial matrix. The polypeptide is Cytochrome c oxidase subunit 3 (MT-CO3) (Eudorcas thomsonii (Thomson's gazelle)).